The chain runs to 283 residues: 4-diphosphocytidyl-2-C-methyl-D-erythritol kinase (283 aa).

Lysine 10 is an active-site residue. Position 99–109 (99–109 (PMGGGLGGGSS)) interacts with ATP. Aspartate 141 is an active-site residue.

This sequence belongs to the GHMP kinase family. IspE subfamily. As to quaternary structure, homodimer.

The enzyme catalyses 4-CDP-2-C-methyl-D-erythritol + ATP = 4-CDP-2-C-methyl-D-erythritol 2-phosphate + ADP + H(+). It participates in isoprenoid biosynthesis; isopentenyl diphosphate biosynthesis via DXP pathway; isopentenyl diphosphate from 1-deoxy-D-xylulose 5-phosphate: step 3/6. Catalyzes the phosphorylation of the position 2 hydroxy group of 4-diphosphocytidyl-2C-methyl-D-erythritol. The polypeptide is 4-diphosphocytidyl-2-C-methyl-D-erythritol kinase (Escherichia coli O127:H6 (strain E2348/69 / EPEC)).